A 314-amino-acid chain; its full sequence is Olfactory receptor 5P6 (314 aa).

At 1–28 the chain is on the extracellular side; sequence MAFQEDGNHTAVTEFVLFGLTDDPVLRV. Residue Asn8 is glycosylated (N-linked (GlcNAc...) asparagine). A helical transmembrane segment spans residues 29 to 49; sequence ILFIIFLCIYLVTVSGNLSTI. At 50 to 57 the chain is on the cytoplasmic side; the sequence is LLIRVSSQ. Residues 58–78 form a helical membrane-spanning segment; it reads LHHPMYFFLSHLAFADIGYSS. Topologically, residues 79 to 102 are extracellular; the sequence is SVTPNMLVNFLVERHTISYIGCAI. Cys100 and Cys192 are disulfide-bonded. Residues 103 to 123 form a helical membrane-spanning segment; that stretch reads QLGSVVFFGSSECFILAAMAY. The Cytoplasmic segment spans residues 124-136; it reads DRFMAICNPLLYS. A helical transmembrane segment spans residues 137–157; the sequence is TKMSTQVCVQLLLIAYIGGFL. Residues 158 to 199 are Extracellular-facing; it reads NTWSFTICFYSLVFCGPNGVNHFFCDFAPLIELSCSDVSVPA. The helical transmembrane segment at 200–220 threads the bilayer; it reads TVPSFTAGSIIVVTVIVIAIS. At 221–240 the chain is on the cytoplasmic side; sequence YIYILITILKMHSTEGRQKA. The chain crosses the membrane as a helical span at residues 241 to 261; it reads FSTCTSHLTAVTLFYGTITFI. The Extracellular segment spans residues 262 to 274; the sequence is YVMPKSSFSTDQN. The helical transmembrane segment at 275–295 threads the bilayer; the sequence is KVVSVFYMVVIPMLNPLIYSL. At 296-314 the chain is on the cytoplasmic side; that stretch reads RNNEIKGALKRQIGRKIFS.

The protein belongs to the G-protein coupled receptor 1 family.

The protein localises to the cell membrane. In terms of biological role, potential odorant receptor. The sequence is that of Olfactory receptor 5P6 from Mus musculus (Mouse).